Reading from the N-terminus, the 248-residue chain is ATP synthase subunit a, chloroplastic (248 aa).

Helical transmembrane passes span 38 to 58 (QVLITSWVVIAILLGSAAIAV), 96 to 116 (VPFIGTLFLFIFVSNWSGALL), 135 to 155 (INTTVALALLTSVAYFYAGLT), 200 to 220 (LVVVVLVSLVPLVIPIPVMFL), and 221 to 241 (GLFTSGIQALIFATLAAAYIG).

The protein belongs to the ATPase A chain family. In terms of assembly, F-type ATPases have 2 components, CF(1) - the catalytic core - and CF(0) - the membrane proton channel. CF(1) has five subunits: alpha(3), beta(3), gamma(1), delta(1), epsilon(1). CF(0) has four main subunits: a, b, b' and c.

The protein resides in the plastid. It localises to the chloroplast thylakoid membrane. Key component of the proton channel; it plays a direct role in the translocation of protons across the membrane. This Nuphar advena (Common spatterdock) protein is ATP synthase subunit a, chloroplastic.